Reading from the N-terminus, the 413-residue chain is MWLSKFQFPSRSIFKGVFLGHKLPLLVRLTSTTTNSKSNGSIPTQYTELSPLLVKQAEKYEAELKDLDKDLSCGIHFDVNKQKHYAKLSALTDTFIEYKEKLNELKSLQEMIVSDPSLRAEAEQEYAELVPQYETTSSRLVNKLLPPHPFADKPSLLELRPGVGGIEAMIFTQNLLDMYIGYANYRKWKYRIISKNENESGSGIIDAILSIEEAGSYDRLRFEAGVHRVQRIPSTETKGRTHTSTAAVVVLPQIGDESAKSIDAYERTFKPGEIRVDIMRASGKGGQHVNTTDSAVRLTHIPSGIVVSMQDERSQHKNKAKAFTILRARLAEKERLEKEEKERKARKSQVSSTNRSDKIRTYNFPQNRITDHRCGFTLLDLPGVLSGERLDEVIEAMSKYDSTERAKELLESN.

Gln287 bears the N5-methylglutamine mark. The disordered stretch occupies residues 335 to 363; the sequence is RLEKEEKERKARKSQVSSTNRSDKIRTYN.

This sequence belongs to the prokaryotic/mitochondrial release factor family. In terms of processing, methylation of glutamine in the GGQ triplet is conserved from bacteria to mammals. N5-methylated on Gln-287 by MTQ1.

Its subcellular location is the mitochondrion. Mitochondrial peptide chain release factor that directs the termination of translation in response to the peptide chain termination codons UAA and UAG. The protein is Peptide chain release factor 1, mitochondrial (MRF1) of Saccharomyces cerevisiae (strain ATCC 204508 / S288c) (Baker's yeast).